Here is a 350-residue protein sequence, read N- to C-terminus: Heat-inducible transcription repressor HrcA (350 aa).

This sequence belongs to the HrcA family.

In terms of biological role, negative regulator of class I heat shock genes (grpE-dnaK-dnaJ and groELS operons). Prevents heat-shock induction of these operons. In Ligilactobacillus salivarius (strain UCC118) (Lactobacillus salivarius), this protein is Heat-inducible transcription repressor HrcA.